The following is a 174-amino-acid chain: Peptide deformylase (174 aa).

2 residues coordinate Fe cation: Cys96 and His138. Residue Glu139 is part of the active site. His142 is a Fe cation binding site.

This sequence belongs to the polypeptide deformylase family. Fe(2+) is required as a cofactor.

The enzyme catalyses N-terminal N-formyl-L-methionyl-[peptide] + H2O = N-terminal L-methionyl-[peptide] + formate. In terms of biological role, removes the formyl group from the N-terminal Met of newly synthesized proteins. Requires at least a dipeptide for an efficient rate of reaction. N-terminal L-methionine is a prerequisite for activity but the enzyme has broad specificity at other positions. The chain is Peptide deformylase from Helicobacter pylori (strain J99 / ATCC 700824) (Campylobacter pylori J99).